Here is an 89-residue protein sequence, read N- to C-terminus: UPF0367 protein PCC8801_1959 (89 aa).

Belongs to the UPF0367 family.

In Rippkaea orientalis (strain PCC 8801 / RF-1) (Cyanothece sp. (strain PCC 8801)), this protein is UPF0367 protein PCC8801_1959.